Reading from the N-terminus, the 620-residue chain is Glutathione-regulated potassium-efflux system protein KefC (620 aa).

A run of 12 helical transmembrane segments spans residues 4–24, 26–46, 54–74, 90–110, 114–134, 149–169, 178–198, 218–238, 270–290, 294–314, 327–347, and 359–379; these read HTLI…PIAV, LGLG…PWGL, SILH…GLEL, GALQ…LLGL, VAEL…MQAM, FAVL…IPLL, MGAF…VVLL, VFSA…EEVG, GLLL…GTLI, LRIV…LWLI, WFAV…GAAQ, and SLTL…VILN. The region spanning 399–518 is the RCK N-terminal domain; it reads QPRVIIAGFG…AGVEKPERET (120 aa). The tract at residues 597-620 is disordered; sequence GWQGTEEGKHTGNMADEPETKPSS.

This sequence belongs to the monovalent cation:proton antiporter 2 (CPA2) transporter (TC 2.A.37) family. KefC subfamily. As to quaternary structure, homodimer. Interacts with the regulatory subunit KefF.

Its subcellular location is the cell inner membrane. Its function is as follows. Pore-forming subunit of a potassium efflux system that confers protection against electrophiles. Catalyzes K(+)/H(+) antiport. The chain is Glutathione-regulated potassium-efflux system protein KefC from Escherichia coli (strain SMS-3-5 / SECEC).